The primary structure comprises 429 residues: D-amino acid dehydrogenase 1 (429 aa).

3–17 (VLVLGSGVIGVTSAY) is an FAD binding site.

This sequence belongs to the DadA oxidoreductase family. The cofactor is FAD.

The enzyme catalyses a D-alpha-amino acid + A + H2O = a 2-oxocarboxylate + AH2 + NH4(+). In terms of biological role, oxidative deamination of D-amino acids. This chain is D-amino acid dehydrogenase 1 (dadA1), found in Ralstonia nicotianae (strain ATCC BAA-1114 / GMI1000) (Ralstonia solanacearum).